The primary structure comprises 430 residues: MLDKSEAIIEAIDAREILDSRGRPTVEAEVRLESGAVGLAQVPSGASTGSFEAHELRDGDKARYGGNGVLKAVRNAKEKIAPELIGKDALDQTTVDYAMIARDGSDNKSNLGANAILAVSLAAAKAAAAELALPLYRYLGGPLANVLPVPLMNVINGGAHAANNVDFQEFMIVPVGASSFKEALRWGAEVFTALSKVLDSKGLLTGVGDEGGFAPNLGSNEEALEILVDSIKAAGYEPGTQVALALDIAASEFYADGQYTYDGTAHSPAEFIDYLTAMVEKYPIVSIEDGLHEDDWDSWTILTARIGHRVQLVGDDLFVTNKVRLQQGIEKKAGNAVLIKLNQIGTLTETLETIDLATRNGYQSVISHRSGETEDTTIADLAVATRAGQIKTGSLCRSERVAKYNRLLRIEDELGDRAVYAPKVGLGPQF.

A (2R)-2-phosphoglycerate-binding site is contributed by Gln168. Glu210 acts as the Proton donor in catalysis. 3 residues coordinate Mg(2+): Asp247, Glu288, and Asp315. Residues Lys340, Arg369, Ser370, and Lys391 each coordinate (2R)-2-phosphoglycerate. Residue Lys340 is the Proton acceptor of the active site.

The protein belongs to the enolase family. It depends on Mg(2+) as a cofactor.

Its subcellular location is the cytoplasm. The protein localises to the secreted. It localises to the cell surface. It catalyses the reaction (2R)-2-phosphoglycerate = phosphoenolpyruvate + H2O. It functions in the pathway carbohydrate degradation; glycolysis; pyruvate from D-glyceraldehyde 3-phosphate: step 4/5. Catalyzes the reversible conversion of 2-phosphoglycerate (2-PG) into phosphoenolpyruvate (PEP). It is essential for the degradation of carbohydrates via glycolysis. This is Enolase from Picosynechococcus sp. (strain ATCC 27264 / PCC 7002 / PR-6) (Agmenellum quadruplicatum).